We begin with the raw amino-acid sequence, 142 residues long: Large ribosomal subunit protein uL13 (142 aa).

It belongs to the universal ribosomal protein uL13 family. As to quaternary structure, part of the 50S ribosomal subunit.

This protein is one of the early assembly proteins of the 50S ribosomal subunit, although it is not seen to bind rRNA by itself. It is important during the early stages of 50S assembly. In Shigella sonnei (strain Ss046), this protein is Large ribosomal subunit protein uL13.